Reading from the N-terminus, the 490-residue chain is Glutamate--tRNA ligase (490 aa).

A 'HIGH' region motif is present at residues 10–20; that stretch reads PSPTGRMHVGN. Residues C109, C111, C140, and H142 each contribute to the Zn(2+) site. Residues 257-261 carry the 'KMSKS' region motif; it reads KLSKR. ATP is bound at residue K260.

This sequence belongs to the class-I aminoacyl-tRNA synthetase family. Glutamate--tRNA ligase type 1 subfamily. Monomer. Zn(2+) serves as cofactor.

It localises to the cytoplasm. The enzyme catalyses tRNA(Glu) + L-glutamate + ATP = L-glutamyl-tRNA(Glu) + AMP + diphosphate. In terms of biological role, catalyzes the attachment of glutamate to tRNA(Glu) in a two-step reaction: glutamate is first activated by ATP to form Glu-AMP and then transferred to the acceptor end of tRNA(Glu). The protein is Glutamate--tRNA ligase of Lachnoclostridium phytofermentans (strain ATCC 700394 / DSM 18823 / ISDg) (Clostridium phytofermentans).